A 427-amino-acid chain; its full sequence is MHYLDISFTYKNTDISVREKLAFDSDEKKEQILKLINSNKNIKESMVLNTCNRVEIIASVEDVKAATAHIIRCMSIFSGVFEDELYERADIYENSGAAHHLFAVASSLDSLVVGETQIVGQLKNAFKFAYDNNSCGEDISKIIHYACKCAAKVRNETQISKNPISVSSVAVAKAKEIFGTLEGKTAIVVGAGEMGELAAKHLISSGAEVIIINRSSERVEQLVDSLGDNASWDSILKLKEYVNNYDLIFSSTAAPHAIITGEIIEPREFHRYFFDIAVPRDIDLLNTELISVYTVDSLEEIVRKNLALREEQAQKAYSIVGQDTSEFLKTLKEDMSVPLIKSIRKQAEICAKNELEKAIKKGYLKHSDYDEAQKLIHQVFKAFLHQPTMKLKGLADEERASELSNGVKFLFDIKDEQNFQAGDIDEI.

Residues 50-53 (TCNR), S110, 115-117 (ETQ), and Q121 contribute to the substrate site. The active-site Nucleophile is C51. Residue 190 to 195 (GAGEMG) coordinates NADP(+).

It belongs to the glutamyl-tRNA reductase family. As to quaternary structure, homodimer.

It catalyses the reaction (S)-4-amino-5-oxopentanoate + tRNA(Glu) + NADP(+) = L-glutamyl-tRNA(Glu) + NADPH + H(+). Its pathway is porphyrin-containing compound metabolism; protoporphyrin-IX biosynthesis; 5-aminolevulinate from L-glutamyl-tRNA(Glu): step 1/2. Catalyzes the NADPH-dependent reduction of glutamyl-tRNA(Glu) to glutamate 1-semialdehyde (GSA). This Campylobacter concisus (strain 13826) protein is Glutamyl-tRNA reductase.